Reading from the N-terminus, the 681-residue chain is Chaperone protein htpG (681 aa).

Positions 1–326 (MQKGNIGVTT…SPDIPLNVSR (326 aa)) are a; substrate-binding. A b region spans residues 327–545 (SYLQSDSNVK…YMRRMKEMAN (219 aa)). The segment at 546–681 (IQAGMSFYGE…NFVKRSIELI (136 aa)) is c. Residues 601–620 (DALKKKQEGKKDEDIPTAEK) are disordered.

It belongs to the heat shock protein 90 family. In terms of assembly, homodimer.

It localises to the cytoplasm. In terms of biological role, molecular chaperone. Has ATPase activity. This is Chaperone protein htpG from Bacteroides fragilis (strain 638R).